A 419-amino-acid chain; its full sequence is Serine hydroxymethyltransferase 2 (419 aa).

(6S)-5,6,7,8-tetrahydrofolate contacts are provided by residues Leu120 and 124–126; that span reads GHL. At Lys229 the chain carries N6-(pyridoxal phosphate)lysine.

This sequence belongs to the SHMT family. As to quaternary structure, homodimer. The cofactor is pyridoxal 5'-phosphate.

Its subcellular location is the cytoplasm. The enzyme catalyses (6R)-5,10-methylene-5,6,7,8-tetrahydrofolate + glycine + H2O = (6S)-5,6,7,8-tetrahydrofolate + L-serine. It functions in the pathway one-carbon metabolism; tetrahydrofolate interconversion. It participates in amino-acid biosynthesis; glycine biosynthesis; glycine from L-serine: step 1/1. Functionally, catalyzes the reversible interconversion of serine and glycine with tetrahydrofolate (THF) serving as the one-carbon carrier. This reaction serves as the major source of one-carbon groups required for the biosynthesis of purines, thymidylate, methionine, and other important biomolecules. Also exhibits THF-independent aldolase activity toward beta-hydroxyamino acids, producing glycine and aldehydes, via a retro-aldol mechanism. In Salmonella typhi, this protein is Serine hydroxymethyltransferase 2.